The sequence spans 237 residues: H/ACA ribonucleoprotein complex subunit 1 (237 aa).

Composition is skewed to gly residues over residues 1-59 (MGFG…GGRG) and 172-237 (RGGG…RGRW). Disordered stretches follow at residues 1 to 64 (MGFG…FDTG) and 157 to 237 (KPPQ…RGRW). RGG-box regions lie at residues 4 to 56 (GKPR…GRGG) and 166 to 236 (KAFT…GRGR).

It belongs to the GAR1 family. As to quaternary structure, component of the box H/ACA small nucleolar ribonucleoprotein (H/ACA snoRNP) complex consisting of Nop60B, Gar1, NPH2 and Nop10, and associated with H/ACA-type snoRNAs.

It is found in the nucleus. The protein resides in the nucleolus. Functionally, component of the box H/ACA small nucleolar ribonucleoprotein (H/ACA snoRNP) complex, which catalyzes pseudouridylation of rRNA. This involves the isomerization of uridine such that the ribose is subsequently attached to C5, instead of the normal N1. Pseudouridine ('psi') residues may serve to stabilize the conformation of rRNAs. Required for ribosome biogenesis. H/ACA snoRNP complex-dependent ribosome biogenesis is important in female germline cell differentiation during oogenesis. The sequence is that of H/ACA ribonucleoprotein complex subunit 1 from Drosophila melanogaster (Fruit fly).